Here is a 227-residue protein sequence, read N- to C-terminus: Probable septum site-determining protein MinC (227 aa).

It belongs to the MinC family. Interacts with MinD and FtsZ.

Functionally, cell division inhibitor that blocks the formation of polar Z ring septums. Rapidly oscillates between the poles of the cell to destabilize FtsZ filaments that have formed before they mature into polar Z rings. Prevents FtsZ polymerization. This Laribacter hongkongensis (strain HLHK9) protein is Probable septum site-determining protein MinC.